Consider the following 218-residue polypeptide: Twisted gastrulation protein homolog 1-B (218 aa).

Positions 1–25 (MKPSFLHIPAAALLLCSLWILPIHC) are cleaved as a signal peptide. N-linked (GlcNAc...) asparagine glycans are attached at residues Asn52, Asn81, and Asn147.

Belongs to the twisted gastrulation protein family. Binds directly to bmp2, bmp4 and bmp7 and can form a ternary complex with bmps and chordin, thus preventing the binding of bmps to their cell surface receptors.

The protein localises to the secreted. Involved in dorsal-ventral patterning, permitting peak BMP signaling by antagonizing the residual anti-BMP activity of the cleavage products of chrd. Functions to promote the formation of ventral mesoderm by increasing the activity of bmp7 and other BMPS. Seems to antagonize BMP signaling by forming ternary complexes with chrd and BMPs, thereby preventing BMPs from binding to their receptors. In addition to the anti-BMP function, also has pro-BMP activity, partly mediated by cleavage and degradation of chrd, which releases BMPs from ternary complexes. May be an important modulator of BMP-regulated cartilage development and chondrocyte differentiation. The chain is Twisted gastrulation protein homolog 1-B (twsg1-b) from Xenopus laevis (African clawed frog).